The chain runs to 486 residues: MDSSVIQRKKVAVIGGGLVGSLQACFLAKRNFQIDVYEAREDTRVATFTRGRSINLALSHRGRQALKAVGLEDQIVSQGIPMRARMIHSLSGKKSAIPYGTKSQYILSVSRENLNKDLLTAAEKYPNVKMHFNHRLLKCNPEEGMITVLGSDKVPKDVTCDLIVGCDGAYSTVRSHLMKKPRFDYSQQYIPHGYMELTIPPKNGDYAMEPNYLHIWPRNTFMMIALPNMNKSFTCTLFMPFEEFEKLLTSNDVVDFFQKYFPDAIPLIGEKLLVQDFFLLPAQPMISVKCSSFHFKSHCVLLGDAAHAIVPFFGQGMNAGFEDCLVFDELMDKFSNDLSLCLPVFSRLRIPDDHAISDLSMYNYIEMRAHVNSSWFIFQKNMERFLHAIMPSTFIPLYTMVTFSRIRYHEAVQRWHWQKKVINKGLFFLGSLIAISSTYLLIHYMSPRSFLRLRRPWNWIAHFRNTTCFPAKAVDSLEQISNLISR.

Residues valine 19, 37–40 (YEAR), and alanine 57 contribute to the FAD site. L-kynurenine-binding residues include arginine 85 and tyrosine 99. Residues arginine 111, leucine 136, threonine 172, aspartate 304, and 317 to 318 (MN) each bind FAD. Residues asparagine 363 and tyrosine 398 each contribute to the L-kynurenine site. 2 helical membrane-spanning segments follow: residues 385 to 404 (FLHA…VTFS) and 425 to 445 (GLFF…IHYM). Asparagine 465 carries N-linked (GlcNAc...) asparagine glycosylation.

This sequence belongs to the aromatic-ring hydroxylase family. KMO subfamily. Requires FAD as cofactor. Highest levels in placenta and liver. Detectable in kidney.

It is found in the mitochondrion outer membrane. It carries out the reaction L-kynurenine + NADPH + O2 + H(+) = 3-hydroxy-L-kynurenine + NADP(+) + H2O. It participates in cofactor biosynthesis; NAD(+) biosynthesis; quinolinate from L-kynurenine: step 1/3. Its function is as follows. Catalyzes the hydroxylation of L-kynurenine (L-Kyn) to form 3-hydroxy-L-kynurenine (L-3OHKyn). Required for synthesis of quinolinic acid, a neurotoxic NMDA receptor antagonist and potential endogenous inhibitor of NMDA receptor signaling in axonal targeting, synaptogenesis and apoptosis during brain development. Quinolinic acid may also affect NMDA receptor signaling in pancreatic beta cells, osteoblasts, myocardial cells, and the gastrointestinal tract. In Homo sapiens (Human), this protein is Kynurenine 3-monooxygenase.